Consider the following 467-residue polypeptide: Gamma-aminobutyric acid receptor subunit gamma-2 (467 aa).

The first 39 residues, 1–39, serve as a signal peptide directing secretion; the sequence is MSSPNIWSTGSSVYSTPVFSQKMTVWILLLLSLYPGFTS. The Extracellular segment spans residues 40–275; sequence QKSDDDYEDY…FDLSRRMGYF (236 aa). Residues asparagine 52 and asparagine 129 are each glycosylated (N-linked (GlcNAc...) asparagine). A disulfide bridge links cysteine 190 with cysteine 204. N-linked (GlcNAc...) asparagine glycosylation is present at asparagine 247. The chain crosses the membrane as a helical span at residues 276–296; the sequence is TIQTYIPCTLIVVLSWVSFWI. At 297-302 the chain is on the cytoplasmic side; that stretch reads NKDAVP. The chain crosses the membrane as a helical span at residues 303–322; sequence ARTSLGITTVLTMTTLSTIA. Residues 323 to 334 are Extracellular-facing; sequence RKSLPKVSYVTA. A helical transmembrane segment spans residues 335-359; it reads MDLFVSVCFIFVFSALVEYGTLHYF. Residues 360–443 are Cytoplasmic-facing; sequence VSNRKPSKDK…IHIRIAKMDS (84 aa). The interval 425 to 442 is interaction with GABARAP; it reads RTGAWRHGRIHIRIAKMD. The helical transmembrane segment at 444–464 threads the bilayer; it reads YARIFFPTAFCLFNLVYWVSY. Topologically, residues 465–467 are extracellular; it reads LYL.

It belongs to the ligand-gated ion channel (TC 1.A.9) family. Gamma-aminobutyric acid receptor (TC 1.A.9.5) subfamily. GABRG2 sub-subfamily. Heteropentamer, formed by a combination of alpha (GABRA1-6), beta (GABRB1-3), gamma (GABRG1-3), delta (GABRD), epsilon (GABRE), rho (GABRR1-3), pi (GABRP) and theta (GABRQ) chains, each subunit exhibiting distinct physiological and pharmacological properties. Interacts with GABARAP. Interacts with KIF21B. Identified in a complex of 720 kDa composed of LHFPL4, NLGN2, GABRA1, GABRB2, GABRG2 and GABRB3. Interacts with LHFPL4. Interacts with SHISA7; interaction leads to the regulation of GABA(A) receptor trafficking, channel deactivation kinetics and pharmacology. Post-translationally, palmitoylated by ZDHHC3/GODZ; required for the accumulation of GABA(A) receptors at the postsynaptic membrane of inhibitory GABAergic synapses. In terms of processing, glycosylated.

Its subcellular location is the postsynaptic cell membrane. The protein localises to the cell membrane. It localises to the cell projection. The protein resides in the dendrite. It is found in the cytoplasmic vesicle membrane. It carries out the reaction chloride(in) = chloride(out). Allosterically activated by benzodiazepines. Activated by pentobarbital. Inhibited by the antagonist bicuculline. Inhibited by zinc ions. Potentiated by histamine. Its function is as follows. Gamma subunit of the heteropentameric ligand-gated chloride channel gated by gamma-aminobutyric acid (GABA), a major inhibitory neurotransmitter in the brain. GABA-gated chloride channels, also named GABA(A) receptors (GABAAR), consist of five subunits arranged around a central pore and contain GABA active binding site(s) located at the alpha and beta subunit interface(s). When activated by GABA, GABAARs selectively allow the flow of chloride anions across the cell membrane down their electrochemical gradient. Gamma-2/GABRG2-containing GABAARs are found at both synaptic and extrasynaptic sites. Chloride influx into the postsynaptic neuron following GABAAR opening decreases the neuron ability to generate a new action potential, thereby reducing nerve transmission. GABAARs containing alpha-1 and beta-2 or -3 subunits exhibit synaptogenic activity; the gamma-2 subunit being necessary but not sufficient to induce rapid synaptic contacts formation. Extrasynaptic gamma-2-containing receptors contribute to the tonic GABAergic inhibition. GABAARs function also as histamine receptor where histamine binds at the interface of two neighboring beta subunits and potentiates GABA response in a gamma-2 subunit-controlled manner. This Pongo abelii (Sumatran orangutan) protein is Gamma-aminobutyric acid receptor subunit gamma-2 (GABRG2).